A 211-amino-acid chain; its full sequence is Arginine exporter protein ArgO (211 aa).

Transmembrane regions (helical) follow at residues 1–21 (MFSY…PLGP), 37–57 (IMIA…GIFG), 68–88 (LLAL…FGAF), 111–131 (IIAT…DTFV), 147–167 (WFAL…AILA), and 182–202 (IINL…ARDG).

It belongs to the LysE/ArgO transporter (TC 2.A.75) family.

It is found in the cell inner membrane. It carries out the reaction L-arginine(in) = L-arginine(out). Involved in the export of arginine. Important to control the intracellular level of arginine and the correct balance between arginine and lysine. This chain is Arginine exporter protein ArgO, found in Escherichia coli O157:H7.